An 892-amino-acid chain; its full sequence is Transposase for transposon Tn4556 (892 aa).

The span at 1 to 12 (MGGRAGLDDGRG) shows a compositional bias: basic and acidic residues. Positions 1-63 (MGGRAGLDDG…GQPARDAEHR (63 aa)) are disordered. The span at 23–34 (VAEGAAGAAAWG) shows a compositional bias: low complexity.

This sequence belongs to the transposase 7 family.

Required for transposition of transposon Tn4556. The polypeptide is Transposase for transposon Tn4556 (tnpA) (Streptomyces fradiae (Streptomyces roseoflavus)).